We begin with the raw amino-acid sequence, 1217 residues long: Inactive disease resistance protein RPS4 (1217 aa).

The region spanning 14–175 (PQHQVFINFR…EIVKAVKTAL (162 aa)) is the TIR domain. Glu-88 is an active-site residue. Positions 211-472 (EQRLKDLEEK…FRSQDKDYVE (262 aa)) constitute an NB-ARC domain. LRR repeat units follow at residues 260–285 (HALI…LLGE), 436–459 (PNIV…AFLD), 614–636 (LKEV…DFNP), 637–659 (INLV…DKDT), 682–706 (AEKL…MKKM), 708–728 (MLAF…EMNL), 729–749 (ISLK…PLIS), 750–774 (DNIE…KLQR), 796–818 (LKAL…EIDI), 819–842 (SFLN…SVQY), and 861–887 (LSQL…NLQC). The segment at 1162–1195 (TEGVDGRVKKKKKTRMDNGRPKKKQRSGRDDNQT) is disordered. The short motif at 1170 to 1177 (KKKKKTRM) is the Nuclear localization signal element.

As to quaternary structure, interacts with EDS1.

The protein resides in the nucleus. It catalyses the reaction NAD(+) + H2O = ADP-D-ribose + nicotinamide + H(+). This chain is Inactive disease resistance protein RPS4 (RPS4), found in Arabidopsis thaliana (Mouse-ear cress).